Consider the following 220-residue polypeptide: NADH-quinone oxidoreductase subunit I (220 aa).

2 4Fe-4S ferredoxin-type domains span residues 71-102 and 112-141; these read LQRL…IITH and DSYT…MGNR. Residues Cys-82, Cys-85, Cys-88, Cys-92, Cys-121, Cys-124, Cys-127, and Cys-131 each coordinate [4Fe-4S] cluster. Positions 187-220 are disordered; the sequence is MQATPLDYVQEPSKEESKEESPTSPESHKGDENV. Residues 198 to 220 show a composition bias toward basic and acidic residues; it reads PSKEESKEESPTSPESHKGDENV.

This sequence belongs to the complex I 23 kDa subunit family. As to quaternary structure, NDH-1 is composed of 14 different subunits. Subunits NuoA, H, J, K, L, M, N constitute the membrane sector of the complex. Requires [4Fe-4S] cluster as cofactor.

Its subcellular location is the cell inner membrane. It carries out the reaction a quinone + NADH + 5 H(+)(in) = a quinol + NAD(+) + 4 H(+)(out). NDH-1 shuttles electrons from NADH, via FMN and iron-sulfur (Fe-S) centers, to quinones in the respiratory chain. The immediate electron acceptor for the enzyme in this species is believed to be ubiquinone. Couples the redox reaction to proton translocation (for every two electrons transferred, four hydrogen ions are translocated across the cytoplasmic membrane), and thus conserves the redox energy in a proton gradient. The protein is NADH-quinone oxidoreductase subunit I of Helicobacter pylori (strain J99 / ATCC 700824) (Campylobacter pylori J99).